Here is an 86-residue protein sequence, read N- to C-terminus: Small ribosomal subunit protein uS15 (86 aa).

The protein belongs to the universal ribosomal protein uS15 family. Part of the 30S ribosomal subunit. Forms a bridge to the 50S subunit in the 70S ribosome, contacting the 23S rRNA.

Functionally, one of the primary rRNA binding proteins, it binds directly to 16S rRNA where it helps nucleate assembly of the platform of the 30S subunit by binding and bridging several RNA helices of the 16S rRNA. Its function is as follows. Forms an intersubunit bridge (bridge B4) with the 23S rRNA of the 50S subunit in the ribosome. This chain is Small ribosomal subunit protein uS15, found in Neorickettsia sennetsu (strain ATCC VR-367 / Miyayama) (Ehrlichia sennetsu).